A 407-amino-acid polypeptide reads, in one-letter code: Bifunctional enzyme IspD/IspF (407 aa).

A 2-C-methyl-D-erythritol 4-phosphate cytidylyltransferase region spans residues 1-246 (MTEASENASA…SSERTHFPDI (246 aa)). Positions 247-407 (RTGNGYDVHA…SVVFPGEVPE (161 aa)) are 2-C-methyl-D-erythritol 2,4-cyclodiphosphate synthase. Residues aspartate 253 and histidine 255 each coordinate a divalent metal cation. Residues 253 to 255 (DVH) and 279 to 280 (HS) each bind 4-CDP-2-C-methyl-D-erythritol 2-phosphate. Histidine 287 provides a ligand contact to a divalent metal cation. Residues 301 to 303 (DIG), 377 to 380 (TTNE), phenylalanine 384, and arginine 387 contribute to the 4-CDP-2-C-methyl-D-erythritol 2-phosphate site.

The protein in the N-terminal section; belongs to the IspD/TarI cytidylyltransferase family. IspD subfamily. It in the C-terminal section; belongs to the IspF family. A divalent metal cation is required as a cofactor.

The enzyme catalyses 2-C-methyl-D-erythritol 4-phosphate + CTP + H(+) = 4-CDP-2-C-methyl-D-erythritol + diphosphate. The catalysed reaction is 4-CDP-2-C-methyl-D-erythritol 2-phosphate = 2-C-methyl-D-erythritol 2,4-cyclic diphosphate + CMP. It functions in the pathway isoprenoid biosynthesis; isopentenyl diphosphate biosynthesis via DXP pathway; isopentenyl diphosphate from 1-deoxy-D-xylulose 5-phosphate: step 2/6. Its pathway is isoprenoid biosynthesis; isopentenyl diphosphate biosynthesis via DXP pathway; isopentenyl diphosphate from 1-deoxy-D-xylulose 5-phosphate: step 4/6. Functionally, bifunctional enzyme that catalyzes the formation of 4-diphosphocytidyl-2-C-methyl-D-erythritol from CTP and 2-C-methyl-D-erythritol 4-phosphate (MEP) (IspD), and catalyzes the conversion of 4-diphosphocytidyl-2-C-methyl-D-erythritol 2-phosphate (CDP-ME2P) to 2-C-methyl-D-erythritol 2,4-cyclodiphosphate (ME-CPP) with a corresponding release of cytidine 5-monophosphate (CMP) (IspF). This is Bifunctional enzyme IspD/IspF from Mesorhizobium japonicum (strain LMG 29417 / CECT 9101 / MAFF 303099) (Mesorhizobium loti (strain MAFF 303099)).